The chain runs to 389 residues: Pre-mRNA-splicing factor PRP46 (389 aa).

WD repeat units follow at residues 83-123 (AHQG…LKAV), 126-165 (GHVL…SDAG), 173-212 (GHLG…EAMT), 215-254 (GHTN…TELL), 257-298 (NHSK…NEFG), 308-347 (DNSR…LQQS), and 356-389 (PEQS…GTSY).

The protein belongs to the WD repeat PRL1/PRL2 family. Associated with the spliceosome.

It is found in the cytoplasm. Its subcellular location is the nucleus. Functionally, involved in pre-mRNA splicing and required for cell cycle progression at G2/M. This chain is Pre-mRNA-splicing factor PRP46 (PRP46), found in Candida albicans (strain SC5314 / ATCC MYA-2876) (Yeast).